The primary structure comprises 234 residues: Synaptogyrin-4 (234 aa).

The region spanning 18-169 (FLRRPKTITR…QAYLAFQDLR (152 aa)) is the MARVEL domain. Helical transmembrane passes span 25–45 (ITRV…LTDG), 66–86 (CSFA…FLVL), 104–124 (LLDF…FCFL), and 145–165 (AAIA…YLAF).

This sequence belongs to the synaptogyrin family.

The protein resides in the membrane. This Homo sapiens (Human) protein is Synaptogyrin-4 (SYNGR4).